Reading from the N-terminus, the 367-residue chain is Peptide chain release factor 2 (367 aa).

Gln254 is subject to N5-methylglutamine.

The protein belongs to the prokaryotic/mitochondrial release factor family. Methylated by PrmC. Methylation increases the termination efficiency of RF2.

Its subcellular location is the cytoplasm. Functionally, peptide chain release factor 2 directs the termination of translation in response to the peptide chain termination codons UGA and UAA. The protein is Peptide chain release factor 2 of Bordetella bronchiseptica (strain ATCC BAA-588 / NCTC 13252 / RB50) (Alcaligenes bronchisepticus).